A 151-amino-acid chain; its full sequence is Deoxyuridine 5'-triphosphate nucleotidohydrolase (151 aa).

Substrate contacts are provided by residues 70–72 (RSG), Asn83, 87–89 (LID), and Met97.

This sequence belongs to the dUTPase family. Mg(2+) serves as cofactor.

The enzyme catalyses dUTP + H2O = dUMP + diphosphate + H(+). It participates in pyrimidine metabolism; dUMP biosynthesis; dUMP from dCTP (dUTP route): step 2/2. In terms of biological role, this enzyme is involved in nucleotide metabolism: it produces dUMP, the immediate precursor of thymidine nucleotides and it decreases the intracellular concentration of dUTP so that uracil cannot be incorporated into DNA. This Pseudomonas fluorescens (strain ATCC BAA-477 / NRRL B-23932 / Pf-5) protein is Deoxyuridine 5'-triphosphate nucleotidohydrolase.